A 419-amino-acid polypeptide reads, in one-letter code: Enolase (419 aa).

Glutamine 161 is a binding site for (2R)-2-phosphoglycerate. The active-site Proton donor is the glutamate 205. Aspartate 240, glutamate 283, and aspartate 309 together coordinate Mg(2+). Positions 334, 363, 364, and 385 each coordinate (2R)-2-phosphoglycerate. Residue lysine 334 is the Proton acceptor of the active site.

The protein belongs to the enolase family. It depends on Mg(2+) as a cofactor.

The protein localises to the cytoplasm. The protein resides in the secreted. It is found in the cell surface. The catalysed reaction is (2R)-2-phosphoglycerate = phosphoenolpyruvate + H2O. It functions in the pathway carbohydrate degradation; glycolysis; pyruvate from D-glyceraldehyde 3-phosphate: step 4/5. Functionally, catalyzes the reversible conversion of 2-phosphoglycerate (2-PG) into phosphoenolpyruvate (PEP). It is essential for the degradation of carbohydrates via glycolysis. The protein is Enolase of Saccharolobus islandicus (strain Y.N.15.51 / Yellowstone #2) (Sulfolobus islandicus).